The sequence spans 163 residues: Putative 4-hydroxy-4-methyl-2-oxoglutarate aldolase (163 aa).

Residues 76 to 79 and Arg-98 contribute to the substrate site; that span reads GDML. Asp-99 is a binding site for a divalent metal cation.

The protein belongs to the class II aldolase/RraA-like family. Homotrimer. A divalent metal cation is required as a cofactor.

The catalysed reaction is 4-hydroxy-4-methyl-2-oxoglutarate = 2 pyruvate. The enzyme catalyses oxaloacetate + H(+) = pyruvate + CO2. In terms of biological role, catalyzes the aldol cleavage of 4-hydroxy-4-methyl-2-oxoglutarate (HMG) into 2 molecules of pyruvate. Also contains a secondary oxaloacetate (OAA) decarboxylase activity due to the common pyruvate enolate transition state formed following C-C bond cleavage in the retro-aldol and decarboxylation reactions. This is Putative 4-hydroxy-4-methyl-2-oxoglutarate aldolase from Pseudomonas fluorescens (strain ATCC BAA-477 / NRRL B-23932 / Pf-5).